Reading from the N-terminus, the 315-residue chain is Calumenin (315 aa).

Positions 1-19 are cleaved as a signal peptide; the sequence is MNKRPLLLCLGLWVACTLS. EF-hand domains follow at residues 68–103, 104–139, 151–186, 188–223, 229–264, and 265–300; these read ESKE…AQKK, YVYD…TYLD, QMMI…EEFD, MKDI…HDGD, WVKT…SDYD, and HSEA…FVGS. The Ca(2+) site is built by aspartate 81, aspartate 83, aspartate 85, tyrosine 87, glutamate 92, aspartate 117, serine 119, aspartate 121, and glutamate 128. A glycan (N-linked (GlcNAc...) asparagine) is linked at asparagine 131. Ca(2+) is bound by residues aspartate 164, aspartate 166, aspartate 168, glutamate 175, aspartate 201, asparagine 203, aspartate 205, glutamate 212, aspartate 242, asparagine 244, aspartate 246, lysine 248, glutamate 253, aspartate 278, asparagine 280, aspartate 282, lysine 284, and glutamate 289. The Prevents secretion from ER motif lies at 312–315; it reads HDEF.

It belongs to the CREC family. As to quaternary structure, interacts with ggcx.

The protein resides in the endoplasmic reticulum membrane. Its subcellular location is the golgi apparatus. It is found in the secreted. It localises to the melanosome. The protein localises to the sarcoplasmic reticulum lumen. Its function is as follows. Involved in regulation of vitamin K-dependent carboxylation of multiple N-terminal glutamate residues. Seems to inhibit gamma-carboxylase ggcx. Binds 7 calcium ions with a low affinity. The protein is Calumenin (calu) of Xenopus laevis (African clawed frog).